A 614-amino-acid polypeptide reads, in one-letter code: Deoxynucleoside triphosphate triphosphohydrolase SAMHD1 (614 aa).

Residues 1 to 13 (MGSPAAGWGAAPA) show a composition bias toward low complexity. The segment at 1–33 (MGSPAAGWGAAPAKRARREGSAESSCGSPADRD) is disordered. An SAM domain is found at 37 to 102 (WDTERLCQHL…LACLNQLRQT (66 aa)). 2 residues coordinate GTP: Lys-107 and Val-108. Asn-110 provides a ligand contact to dGTP. Residues Asp-128, Gln-133, and Arg-136 each contribute to the GTP site. Residues Gln-140, Leu-141, Val-147, and Arg-155 each contribute to the dGTP site. A dATP-binding site is contributed by Gln-140. Gln-140 lines the dCTP pocket. Gln-140 contributes to the dTTP binding site. Arg-155 provides a ligand contact to dATP. Arg-155 lines the dCTP pocket. Arg-155 is a binding site for dTTP. In terms of domain architecture, HD spans 155–307 (RFEHSLGVGY…GIDVDKWDYF (153 aa)). 3 residues coordinate Mn(2+): His-158, His-197, and Asp-198. Positions 201 and 206 each coordinate dATP. His-201 and His-206 together coordinate dCTP. Residues His-201 and His-206 each contribute to the dTTP site. Residue His-224 is part of the active site. Asp-302 contributes to the Mn(2+) binding site. Residues Lys-303, Tyr-306, Asp-310, Arg-324, Arg-343, Lys-345, Asn-349, Arg-357, Tyr-365, Gln-366, His-367, and Lys-368 each coordinate dGTP. Residues Lys-303, Tyr-306, and Asp-310 each coordinate dATP. Residues Lys-303, Tyr-306, and Asp-310 each contribute to the dCTP site. Lys-303, Tyr-306, and Asp-310 together coordinate dTTP. Arg-357 contacts dATP. Arg-357 lines the dCTP pocket. Position 366 (Gln-366) interacts with dATP. Residue Gln-366 coordinates dCTP. Gln-366 contacts dTTP. GTP is bound by residues Arg-442, Lys-446, and Lys-515. Residue Lys-515 participates in dGTP binding.

The protein belongs to the SAMHD1 family. As to quaternary structure, homodimer; in absence of GTP and dNTP. Homotetramer; in GTP- and dNTP-bound form. Interacts with rbbp8/CtIP. Zn(2+) serves as cofactor.

The protein localises to the nucleus. The protein resides in the chromosome. It catalyses the reaction a 2'-deoxyribonucleoside 5'-triphosphate + H2O = a 2'-deoxyribonucleoside + triphosphate + H(+). The enzyme catalyses dATP + H2O = 2'-deoxyadenosine + triphosphate + H(+). The catalysed reaction is dCTP + H2O = 2'-deoxycytidine + triphosphate + H(+). It carries out the reaction dGTP + H2O = 2'-deoxyguanosine + triphosphate + H(+). It catalyses the reaction dTTP + H2O = thymidine + triphosphate + H(+). With respect to regulation, allosterically activated and regulated via the combined actions of GTP and dNTPs (dATP, dGTP, dTTP and dCTP): Allosteric site 1 binds GTP, while allosteric site 2 binds dNTP. Allosteric activation promotes the formation of highly active homotetramers. In terms of biological role, protein that acts both as a host restriction factor involved in defense response to virus and as a regulator of DNA end resection at stalled replication forks. Has deoxynucleoside triphosphate (dNTPase) activity, which is required to restrict infection by viruses: dNTPase activity reduces cellular dNTP levels to levels too low for retroviral reverse transcription to occur, blocking early-stage virus replication in dendritic and other myeloid cells. Functions during S phase at stalled DNA replication forks to promote the resection of gapped or reversed forks: acts by stimulating the exonuclease activity of MRE11, activating the ATR-CHK1 pathway and allowing the forks to restart replication. Its ability to promote degradation of nascent DNA at stalled replication forks is required to prevent induction of type I interferons, thereby preventing chronic inflammation. Ability to promote DNA end resection at stalled replication forks is independent of dNTPase activity. The chain is Deoxynucleoside triphosphate triphosphohydrolase SAMHD1 from Gallus gallus (Chicken).